A 134-amino-acid polypeptide reads, in one-letter code: Endoribonuclease YbeY (134 aa).

His94, His98, and His104 together coordinate Zn(2+).

The protein belongs to the endoribonuclease YbeY family. Zn(2+) serves as cofactor.

It localises to the cytoplasm. Its function is as follows. Single strand-specific metallo-endoribonuclease involved in late-stage 70S ribosome quality control and in maturation of the 3' terminus of the 16S rRNA. The sequence is that of Endoribonuclease YbeY from Campylobacter jejuni subsp. jejuni serotype O:23/36 (strain 81-176).